A 472-amino-acid polypeptide reads, in one-letter code: Ribulose bisphosphate carboxylase large chain 1 (472 aa).

Residues N115 and T165 each contribute to the substrate site. K167 acts as the Proton acceptor in catalysis. Residue K169 participates in substrate binding. Mg(2+)-binding residues include K193, D195, and E196. At K193 the chain carries N6-carboxylysine. The active-site Proton acceptor is the H286. The substrate site is built by R287, H319, and S371.

Belongs to the RuBisCO large chain family. Type I subfamily. As to quaternary structure, heterohexadecamer of 8 large chains and 8 small chains. Requires Mg(2+) as cofactor.

The enzyme catalyses 2 (2R)-3-phosphoglycerate + 2 H(+) = D-ribulose 1,5-bisphosphate + CO2 + H2O. It carries out the reaction D-ribulose 1,5-bisphosphate + O2 = 2-phosphoglycolate + (2R)-3-phosphoglycerate + 2 H(+). Functionally, ruBisCO catalyzes two reactions: the carboxylation of D-ribulose 1,5-bisphosphate, the primary event in carbon dioxide fixation, as well as the oxidative fragmentation of the pentose substrate. Both reactions occur simultaneously and in competition at the same active site. This is Ribulose bisphosphate carboxylase large chain 1 from Rhodopseudomonas palustris (strain BisB5).